The primary structure comprises 913 residues: MQMFRHSSADMWRAKKPTLERRSTDGRRSSIVDWINGLSDNNNYKSDHWVEKHDEGCERMTRNGSVCAVEESEPDVPTQHREVLLTKLKIEIKNIMAEHGAKKYLNLNSPYVTSLCIAVDACIMDGLRRRLLTLFNSPSSMSLLQIIAKSNGPAQQVLDQTREIEELRTSAIPVHLIWIREALYLKSLSTIINHFIDSKSVRRYYDNSALLLDPVKGRLVATLMMAPCMVTYRRMSNRIEQEATAEELVEGATRGSTSTVPSRPPLSITRQVSSIAASVERNGSVSRDYVFSLHHSCKSTLLYGKNNVCVAMNGSDFAKGYMSLQKFYDGNLSLKWVPNQLMHASSQPSSGHSNNGEFTNIWKNTINIEMQDIIYIHLHQKDEISPTCLTFVNCEGVQSAPFQLPAGQHSIAFLSSLETGLAPLLRLDPPLWVGTTKEKILPRLRKRSTAVANPAMLDYVFRLVRTSGVEPAPEDIEDPLAPTSHSPPIHDNCVSLPNSPYIVDNVDSIVNFQIGTACQSMRNQIMARAFYGWLTYVRHLRTIRTHLLHLVDTKTLICDDDCDPVDEKFWKQARAEPTEENEKEFLKRVYWRGIEGINTKEVRRMAWPYLLGLFEWNESPESRLEQFTSQYWQDIEEWRVLEAEVRRRDEEAFRAARARKAASPVREESCDVFEDPNEPTCSQHYDRENLITLFRANLHRIDKDVERCDRNLMFFSNKDNLESLRRVMYTYVRRNLEEGYTQGMCDLLAPLLVTFEDEALTLECFSLLMLRQRGKFPQRPGMSKCLLNLRSLIQVVDPQIYALISDIDYAQALSFAFRWFLLDFKRELSYECTYKVWEVIWAAQRLRITDDFAIFFGLATITNYHDVLITNNFDYTDMIKFFNEMAERHDCSRLLSSARTHVKCLQNLVQHLK.

Residues 1–24 (MQMFRHSSADMWRAKKPTLERRST) are disordered. The 135-residue stretch at 106–240 (NLNSPYVTSL…TYRRMSNRIE (135 aa)) folds into the RUN domain. The Rab-GAP TBC domain occupies 597–844 (INTKEVRRMA…KVWEVIWAAQ (248 aa)).

This sequence belongs to the RUTBC family. In terms of assembly, interacts with rab-19. Interacts with ric-19; the interaction is direct and may be required for the activation of rab-2 and dense vesicle maturation in cholinergic motoneurons. Interacts (via RUN domain) with rund-1. Does not interact with unc-108 (GTP-bound form). As to expression, expressed in neurons in the head, tail and ventral nerve cord (at protein level).

It is found in the golgi apparatus. Its subcellular location is the trans-Golgi network. The protein localises to the early endosome. It localises to the cytoplasmic vesicle membrane. Its function is as follows. Interacts with numerous Rab family members, functioning as Rab effector for some, and as GTPase activator for others. GTPase activator for rab-2. In association with ric-19 activates rab-2 during dense core vesicle maturation in cholinergic motoneurons. The protein is Rab GTPase-activating protein tbc-8 of Caenorhabditis elegans.